We begin with the raw amino-acid sequence, 469 residues long: Dihydrolipoyl dehydrogenase (469 aa).

Residues 40–48 (EKASLGGVC), Lys-57, and Ala-120 each bind FAD. A disulfide bridge links Cys-48 with Cys-53. NAD(+) is bound by residues 186 to 190 (GGGAI), Glu-209, and 275 to 278 (AVGV). Residues Asp-317 and Ala-325 each coordinate FAD. The Proton acceptor role is filled by His-450.

The protein belongs to the class-I pyridine nucleotide-disulfide oxidoreductase family. Homodimer. It depends on FAD as a cofactor.

It localises to the cytoplasm. It carries out the reaction N(6)-[(R)-dihydrolipoyl]-L-lysyl-[protein] + NAD(+) = N(6)-[(R)-lipoyl]-L-lysyl-[protein] + NADH + H(+). Its function is as follows. Lipoamide dehydrogenase is a component of the alpha-ketoacid dehydrogenase complexes. The chain is Dihydrolipoyl dehydrogenase (lpd) from Chlorobaculum parvum (strain DSM 263 / NCIMB 8327) (Chlorobium vibrioforme subsp. thiosulfatophilum).